Reading from the N-terminus, the 258-residue chain is Capsid protein (258 aa).

Residues 3–20 (KRPGDIIISTPGSKVRRR) carry the Bipartite nuclear localization signal motif. The Nuclear localization signal motif lies at 41–55 (RKRAWVNRPMYRKPT). Residues 69-86 (CEGPCKVQSFEQRDDVKH) fold into a zinc finger. The short motif at 102–123 (LTHRVGKRFCIKSIYILGKIWL) is the Nuclear export signal element. The Bipartite nuclear localization signal signature appears at 202–249 (KRFYRLNHHVTYNHQEAGKYENHTENALLLYMACTHASNPVYATLKIR).

Belongs to the geminiviridae capsid protein family. As to quaternary structure, homomultimer. Binds to single-stranded and double-stranded viral DNA. Interacts (via nuclear localization signals) with host importin alpha-1a.

It localises to the virion. The protein resides in the host nucleus. Functionally, encapsidates the viral DNA into characteristic twinned ('geminate') particles. Binds the genomic viral ssDNA and shuttles it into and out of the cell nucleus. The CP of bipartite geminiviruses is not required for cell-to-cell or systemic movement. This chain is Capsid protein, found in African cassava mosaic virus (isolate West Kenyan 844) (ACMV).